A 201-amino-acid polypeptide reads, in one-letter code: Adenylyl-sulfate kinase (201 aa).

An ATP-binding site is contributed by 35–42; it reads GLSGSGKS. Residue serine 109 is the Phosphoserine intermediate of the active site.

It belongs to the APS kinase family.

It carries out the reaction adenosine 5'-phosphosulfate + ATP = 3'-phosphoadenylyl sulfate + ADP + H(+). Its pathway is sulfur metabolism; hydrogen sulfide biosynthesis; sulfite from sulfate: step 2/3. Its function is as follows. Catalyzes the synthesis of activated sulfate. This is Adenylyl-sulfate kinase from Salmonella typhi.